A 200-amino-acid chain; its full sequence is MAPSRTSTVKNKNASKHAANGSGIRNSKTVSRAQSDGVSKSKGKKATQSKGAPPKPQKQGNKMATLKKKRRVYTEKELGIPSLNMITPVGVEKPKGKKKGKVFVDDRESMMTILAMVNADKDGQIESKMMRARQMEEIREARKAEHERKQEMQKNKLKGMKDDLRKKRKRGGDDEGDNVKGEALAGTKPLKPKKKTVSFA.

Composition is skewed to polar residues over residues 1 to 12 (MAPSRTSTVKNK) and 23 to 38 (GIRN…SDGV). 2 disordered regions span residues 1–73 (MAPS…RRVY) and 138–200 (IREA…VSFA). A coiled-coil region spans residues 130 to 170 (MRARQMEEIREARKAEHERKQEMQKNKLKGMKDDLRKKRKR). Residues 138 to 180 (IREARKAEHERKQEMQKNKLKGMKDDLRKKRKRGGDDEGDNVK) are compositionally biased toward basic and acidic residues. Basic residues predominate over residues 190–200 (LKPKKKTVSFA).

It belongs to the LOC1 family. As to quaternary structure, component of the 66S pre-ribosomal particle.

It is found in the nucleus. It localises to the nucleolus. In terms of biological role, required for efficient assembly and nuclear export of the 60S ribosomal subunit. The chain is 60S ribosomal subunit assembly/export protein loc1 (loc1) from Sclerotinia sclerotiorum (strain ATCC 18683 / 1980 / Ss-1) (White mold).